The chain runs to 768 residues: Polyadenylate-binding protein, cytoplasmic and nuclear (768 aa).

Residues 1-11 (MSAETATNPPV) are compositionally biased toward polar residues. Residues 1 to 52 (MSAETATNPPVDTTPGAAPESATNGSNANVAADTTAGEASQTTSSTTPTAQP) are disordered. Over residues 39–52 (ASQTTSSTTPTAQP) the composition is skewed to low complexity. 4 RRM domains span residues 55 to 133 (ASLY…WSQR), 143 to 220 (GNVF…HHIA), 236 to 314 (TNVY…RAQK), and 340 to 470 (VNLY…LAQR). 3 disordered regions span residues 374–428 (DFAP…EKKP), 633–662 (QQGM…NASP), and 739–768 (KNKG…ETKS). The segment covering 637–646 (GRPGQAGRGQ) has biased composition (gly residues). The PABC domain occupies 662–739 (PNGLTLQVLN…ALTVYDEYVK (78 aa)). Residues 753–768 (NKSKDASQETAEETKS) are compositionally biased toward basic and acidic residues.

The protein belongs to the polyadenylate-binding protein type-1 family.

Its subcellular location is the cytoplasm. The protein localises to the nucleus. Functionally, binds the poly(A) tail of mRNA. Appears to be an important mediator of the multiple roles of the poly(A) tail in mRNA biogenesis, stability and translation. In the nucleus, involved in both mRNA cleavage and polyadenylation. Is also required for efficient mRNA export to the cytoplasm. Acts in concert with a poly(A)-specific nuclease (PAN) to affect poly(A) tail shortening, which may occur concomitantly with either nucleocytoplasmic mRNA transport or translational initiation. In the cytoplasm, stimulates translation initiation and regulates mRNA decay through translation termination-coupled poly(A) shortening, probably mediated by PAN. The chain is Polyadenylate-binding protein, cytoplasmic and nuclear (PAB1) from Coccidioides immitis (strain RS) (Valley fever fungus).